Consider the following 550-residue polypeptide: Glucose-6-phosphate isomerase (550 aa).

Catalysis depends on Glu357, which acts as the Proton donor. Catalysis depends on residues His388 and Lys516.

It belongs to the GPI family.

Its subcellular location is the cytoplasm. The catalysed reaction is alpha-D-glucose 6-phosphate = beta-D-fructose 6-phosphate. The protein operates within carbohydrate biosynthesis; gluconeogenesis. It participates in carbohydrate degradation; glycolysis; D-glyceraldehyde 3-phosphate and glycerone phosphate from D-glucose: step 2/4. Catalyzes the reversible isomerization of glucose-6-phosphate to fructose-6-phosphate. The polypeptide is Glucose-6-phosphate isomerase (Psychromonas ingrahamii (strain DSM 17664 / CCUG 51855 / 37)).